Here is a 193-residue protein sequence, read N- to C-terminus: Ectoine TRAP transporter small permease protein TeaB (193 aa).

Transmembrane regions (helical) follow at residues 33-55, 65-82, 103-125, and 145-167; these read ILALGVLLMATNTVANVIGRFAL, VNRILIIMITFAGIGYAA, RALMIVISLFTSLVMFFLMYYSV, and IFIIYVWVPLGFLITGIQYLFTA.

It belongs to the TRAP transporter small permease family. The complex comprises the extracytoplasmic solute receptor protein TeaA, and the two transmembrane proteins TeaB and TeaC.

It is found in the cell inner membrane. Part of the tripartite ATP-independent periplasmic (TRAP) transport system TeaABC involved in the uptake of ectoine and hydroxyectoine in response to osmotic upshock. Probably functions as a recovery system for synthesized ectoine that leaks out of the cell. The chain is Ectoine TRAP transporter small permease protein TeaB (teaB) from Halomonas elongata (strain ATCC 33173 / DSM 2581 / NBRC 15536 / NCIMB 2198 / 1H9).